The primary structure comprises 75 residues: Caerin 1.11 (75 aa).

The signal sequence occupies residues 1–22 (MASLKKSLFLVLFLGFVSVSIC). The propeptide occupies 23–49 (EEEKRQEDEDEHEEEGENQEEGSEEKR). Residues 24–48 (EEKRQEDEDEHEEEGENQEEGSEEK) are disordered. Residues 30-45 (DEDEHEEEGENQEEGS) show a composition bias toward acidic residues. A Leucine amide modification is found at L74.

The protein belongs to the frog skin active peptide (FSAP) family. Caerin subfamily. In terms of tissue distribution, expressed by the skin glands.

It localises to the secreted. The protein localises to the target cell membrane. Functionally, cationic amphipathic alpha-helical antimicrobial peptide with weak or no activity against both Gram-positive and Gram-negative bacteria. Is weakly active against E.coli (MIC=25 uM), E.cloacae (MIC=50 uM), K.pneumoniae (MIC=25 uM), and S.haemolyticus (MIC=50 uM). Has no activity against S.typhimurium, S.enteritidis, B.megaterium, and S.aureus (MIC&gt;100 uM). This is Caerin 1.11 from Ranoidea caerulea (Green tree frog).